A 365-amino-acid polypeptide reads, in one-letter code: Hematopoietic SH2 domain-containing protein homolog (365 aa).

The SH2 domain occupies 34 to 125 (WFHGIISRKA…PYNELLTVAC (92 aa)). Disordered regions lie at residues 199–278 (QSTD…QQKP) and 335–365 (AEHPISDGIPKSSDRNLPVEYRHPPPFAPGY). Polar residues predominate over residues 257–277 (QQITPNTPNEGRTQQKNQQQK).

Its function is as follows. May be an adapter protein involved in tyrosine kinase signaling. The chain is Hematopoietic SH2 domain-containing protein homolog (hsh2d) from Danio rerio (Zebrafish).